Reading from the N-terminus, the 71-residue chain is Putative antitoxin VapB15 (71 aa).

It belongs to the UPF0330 family.

In terms of biological role, possibly the antitoxin component of a type II toxin-antitoxin (TA) system. Its cognate toxin is VapC15 (Potential). This chain is Putative antitoxin VapB15 (vapB15), found in Archaeoglobus fulgidus (strain ATCC 49558 / DSM 4304 / JCM 9628 / NBRC 100126 / VC-16).